Consider the following 179-residue polypeptide: Transcription factor NF-E4 (179 aa).

At K43 the chain carries N6-acetyllysine. Residues 100–179 (AMKATGPHNA…QLPSLHLSQG (80 aa)) are disordered. Polar residues-rich tracts occupy residues 143–153 (LSQSNPPTRIS) and 163–179 (ALEQTPQQLPSLHLSQG).

Component of the SSP (stage selector protein) complex, which appears to be a heteromer of TFCP2 and 2 copies of NFE4. Interacts with HDAC1 and PCAF. Isoform 2 interacts with TFCP2. Acetylation at Lys-43 prolongs the protein half-life by preventing ubiquitin-mediated degradation and reduces the interaction between NF-E4 and HDAC1, potentially maximizing the activating ability of the factor at the gamma-promoter. In terms of processing, ubiquitinated; leading to its degradation by the proteasome. Acetylation at Lys-43 prevents ubiquitination. As to expression, specifically expressed in fetal liver, cord blood and bone marrow. Also expressed in the K562 and HEL cell lines, which constitutively express the fetal globin genes.

It is found in the nucleus. Functions as part of the SSP (stage selector protein) complex, a complex that contributes to the preferential expression of the gamma-gene in fetal erythroid cells by facilitating the interaction of the gamma-globin genes with enhancer elements contained in the locus control region (LCR). The complex binds to the stage selector element (SSE) in the proximal gamma-globin promoter. In contrast, isoform 2 acts as a repressor of gamma-globin gene expression by preventing NFE2 and RNA polymerase II recruitment to the promoter. This Homo sapiens (Human) protein is Transcription factor NF-E4 (NFE4).